The sequence spans 881 residues: Protein P (881 aa).

The segment at 1–184 (MHPFYQLFRN…GKPYSWEHRQ (184 aa)) is terminal protein domain (TP). The segment at 185–384 (LEQHNGQQHK…YCLHHIVSSI (200 aa)) is spacer. The interval 263-351 (IPCESKAPSE…PAGICRGTES (89 aa)) is disordered. Composition is skewed to polar residues over residues 270–279 (PSEQQQSSLR) and 287–314 (NQIQ…IQSG). Basic and acidic residues predominate over residues 326 to 340 (FERHTPSFDNEKSDR). The interval 385-726 (DDWGPCTFDG…YGELWPVARQ (342 aa)) is polymerase/reverse transcriptase domain (RT). A Reverse transcriptase domain is found at 395–636 (DVTIRSPRTP…HTLHFMGYTI (242 aa)). The Mg(2+) site is built by aspartate 467, aspartate 587, and aspartate 588.

The protein belongs to the hepadnaviridae P protein family.

The catalysed reaction is DNA(n) + a 2'-deoxyribonucleoside 5'-triphosphate = DNA(n+1) + diphosphate. The enzyme catalyses Endonucleolytic cleavage to 5'-phosphomonoester.. Activated by host HSP70 and HSP40 in vitro to be able to bind the epsilon loop of the pgRNA. Because deletion of the RNase H region renders the protein partly chaperone-independent, the chaperones may be needed indirectly to relieve occlusion of the RNA-binding site by this domain. Inhibited by several reverse-transcriptase inhibitors: Lamivudine, Adefovir and Entecavir. Its function is as follows. Multifunctional enzyme that converts the viral RNA genome into dsDNA in viral cytoplasmic capsids. This enzyme displays a DNA polymerase activity that can copy either DNA or RNA templates, and a ribonuclease H (RNase H) activity that cleaves the RNA strand of RNA-DNA heteroduplexes in a partially processive 3'- to 5'-endonucleasic mode. Neo-synthesized pregenomic RNA (pgRNA) are encapsidated together with the P protein, and reverse-transcribed inside the nucleocapsid. Initiation of reverse-transcription occurs first by binding the epsilon loop on the pgRNA genome, and is initiated by protein priming, thereby the 5'-end of (-)DNA is covalently linked to P protein. Partial (+)DNA is synthesized from the (-)DNA template and generates the relaxed circular DNA (RC-DNA) genome. After budding and infection, the RC-DNA migrates in the nucleus, and is converted into a plasmid-like covalently closed circular DNA (cccDNA). The activity of P protein does not seem to be necessary for cccDNA generation, and is presumably released from (+)DNA by host nuclear DNA repair machinery. The protein is Protein P of Ground squirrel hepatitis virus (strain 27) (GSHV).